The sequence spans 522 residues: MPAGGFVVGDGQKAYPGKLTPFVLFTCVVAAMGGLIFGYDIGISGGVTSMPSFLKRFFPSVYRKQQEDASTNQYCQYDSPTLTMFTSSLYLAALISSLVASTVTRKFGRRLSMLFGGILFCAGALINGFAKHVWMLIVGRILLGFGIGFANQAVPLYLSEMAPYKYRGALNIGFQLSITIGILVAEVLNYFFAKIKGGWGWRLSLGGAVVPALIITIGSLVLPDTPNSMIERGQHEEAKTKLRRIRGVDDVSQEFDDLVAASKESQSIEHPWRNLLRRKYRPHLTMAVMIPFFQQLTGINVIMFYAPVLFNTIGFTTDASLMSAVVTGSVNVAATLVSIYGVDRWGRRFLFLEGGTQMLICQAVVAACIGAKFGVDGTPGELPKWYAIVVVTFICIYVAGFAWSWGPLGWLVPSEIFPLEIRSAAQSITVSVNMIFTFIIAQIFLTMLCHLKFGLFLVFAFFVVVMSIFVYIFLPETKGIPIEEMGQVWRSHWYWSRFVEDGEYGNALEMGKNSNQAGTKHV.

The Cytoplasmic portion of the chain corresponds to 1–22; it reads MPAGGFVVGDGQKAYPGKLTPF. The chain crosses the membrane as a helical span at residues 23 to 43; that stretch reads VLFTCVVAAMGGLIFGYDIGI. At 44–79 the chain is on the extracellular side; that stretch reads SGGVTSMPSFLKRFFPSVYRKQQEDASTNQYCQYDS. Residues 80-100 traverse the membrane as a helical segment; it reads PTLTMFTSSLYLAALISSLVA. Over 101–117 the chain is Cytoplasmic; it reads STVTRKFGRRLSMLFGG. Residues 118-138 traverse the membrane as a helical segment; it reads ILFCAGALINGFAKHVWMLIV. Residues 139 to 140 are Extracellular-facing; it reads GR. Residues 141–161 traverse the membrane as a helical segment; it reads ILLGFGIGFANQAVPLYLSEM. Residues 162-171 are Cytoplasmic-facing; sequence APYKYRGALN. The chain crosses the membrane as a helical span at residues 172-192; sequence IGFQLSITIGILVAEVLNYFF. Over 193-202 the chain is Extracellular; sequence AKIKGGWGWR. Residues 203–223 form a helical membrane-spanning segment; that stretch reads LSLGGAVVPALIITIGSLVLP. Residues 224-289 lie on the Cytoplasmic side of the membrane; that stretch reads DTPNSMIERG…YRPHLTMAVM (66 aa). The residue at position 252 (S252) is a Phosphoserine. A helical membrane pass occupies residues 290–310; sequence IPFFQQLTGINVIMFYAPVLF. The Extracellular segment spans residues 311-321; it reads NTIGFTTDASL. A helical membrane pass occupies residues 322–342; that stretch reads MSAVVTGSVNVAATLVSIYGV. The Cytoplasmic segment spans residues 343-348; the sequence is DRWGRR. The chain crosses the membrane as a helical span at residues 349-369; it reads FLFLEGGTQMLICQAVVAACI. Residues 370–384 are Extracellular-facing; it reads GAKFGVDGTPGELPK. The chain crosses the membrane as a helical span at residues 385-405; the sequence is WYAIVVVTFICIYVAGFAWSW. Residues 406–427 lie on the Cytoplasmic side of the membrane; the sequence is GPLGWLVPSEIFPLEIRSAAQS. A helical membrane pass occupies residues 428–448; it reads ITVSVNMIFTFIIAQIFLTML. The Extracellular segment spans residues 449 to 452; sequence CHLK. Residues 453–473 form a helical membrane-spanning segment; it reads FGLFLVFAFFVVVMSIFVYIF. Residues 474-522 are Cytoplasmic-facing; sequence LPETKGIPIEEMGQVWRSHWYWSRFVEDGEYGNALEMGKNSNQAGTKHV.

Belongs to the major facilitator superfamily. Sugar transporter (TC 2.A.1.1) family. Mostly expressed in young leaves, especially in guard cells (at protein level). Also present in roots.

It is found in the cell membrane. Major hexose transporter. Mediates an active uptake of hexoses, by sugar/hydrogen symport. Can transport glucose, 3-O-methylglucose, fructose, xylose, mannose, galactose, fucose, 2-deoxyglucose and arabinose. Confers sensitivity to galactose in seedlings. The sequence is that of Sugar transport protein 1 (STP1) from Arabidopsis thaliana (Mouse-ear cress).